A 433-amino-acid chain; its full sequence is Phosphoribosylamine--glycine ligase (433 aa).

The ATP-grasp domain occupies 110–317 (RNFMKKYGIE…FVDIMSAVVK (208 aa)). Residue 137–194 (IEKLGDVAVKPSGLTGGKGVKVMGDQLPDLKAAKAYTSELLEKGSVVIEERFIGEEFT) coordinates ATP. Positions 275, 287, and 289 each coordinate Mg(2+). Residues glutamine 275, glutamate 287, and asparagine 289 each contribute to the Mn(2+) site.

Belongs to the GARS family. The cofactor is Mg(2+). Mn(2+) serves as cofactor.

It carries out the reaction 5-phospho-beta-D-ribosylamine + glycine + ATP = N(1)-(5-phospho-beta-D-ribosyl)glycinamide + ADP + phosphate + H(+). It functions in the pathway purine metabolism; IMP biosynthesis via de novo pathway; N(1)-(5-phospho-D-ribosyl)glycinamide from 5-phospho-alpha-D-ribose 1-diphosphate: step 2/2. This is Phosphoribosylamine--glycine ligase from Methanosarcina barkeri (strain Fusaro / DSM 804).